The primary structure comprises 247 residues: 3-deoxy-manno-octulosonate cytidylyltransferase (247 aa).

This sequence belongs to the KdsB family.

It is found in the cytoplasm. It carries out the reaction 3-deoxy-alpha-D-manno-oct-2-ulosonate + CTP = CMP-3-deoxy-beta-D-manno-octulosonate + diphosphate. It functions in the pathway nucleotide-sugar biosynthesis; CMP-3-deoxy-D-manno-octulosonate biosynthesis; CMP-3-deoxy-D-manno-octulosonate from 3-deoxy-D-manno-octulosonate and CTP: step 1/1. Its pathway is bacterial outer membrane biogenesis; lipopolysaccharide biosynthesis. Its function is as follows. Activates KDO (a required 8-carbon sugar) for incorporation into bacterial lipopolysaccharide in Gram-negative bacteria. The polypeptide is 3-deoxy-manno-octulosonate cytidylyltransferase (Methylorubrum extorquens (strain PA1) (Methylobacterium extorquens)).